Reading from the N-terminus, the 129-residue chain is MAKAPVRARKRVRKQVSDGVAHIHASFNNTIVTITDRQGNALGWATAGGSGFRGSRKSTPFAAQVAAERCADAVKEYGIKNLEVMVKGPGPGRESTIRALNAAGFRITNITDVTPIPHNGCRPPKKRRV.

The protein belongs to the universal ribosomal protein uS11 family. As to quaternary structure, part of the 30S ribosomal subunit. Interacts with proteins S7 and S18. Binds to IF-3.

Its function is as follows. Located on the platform of the 30S subunit, it bridges several disparate RNA helices of the 16S rRNA. Forms part of the Shine-Dalgarno cleft in the 70S ribosome. This is Small ribosomal subunit protein uS11 from Salmonella newport (strain SL254).